Consider the following 65-residue polypeptide: Conotoxin Bu19 (65 aa).

A signal peptide spans 1–21 (MGMRMVFTVFLLVVLATTVVS). Residues 22–48 (FTSDRASDGRNAAANDKASDLAALAVR) constitute a propeptide that is removed on maturation. Cystine bridges form between Cys-50–Cys-56 and Cys-51–Cys-64. Cys-64 is subject to Cysteine amide.

This sequence belongs to the conotoxin A superfamily. As to expression, expressed by the venom duct.

It localises to the secreted. The chain is Conotoxin Bu19 from Conus bullatus (Bubble cone).